The primary structure comprises 118 residues: Small ribosomal subunit protein uS13 (118 aa).

The interval 92–118 (RRNLPVRGQNTKNNARTRKGPTRPLKR) is disordered. A compositionally biased stretch (basic residues) spans 106–118 (ARTRKGPTRPLKR).

This sequence belongs to the universal ribosomal protein uS13 family. As to quaternary structure, part of the 30S ribosomal subunit. Forms a loose heterodimer with protein S19. Forms two bridges to the 50S subunit in the 70S ribosome.

Located at the top of the head of the 30S subunit, it contacts several helices of the 16S rRNA. In the 70S ribosome it contacts the 23S rRNA (bridge B1a) and protein L5 of the 50S subunit (bridge B1b), connecting the 2 subunits; these bridges are implicated in subunit movement. Contacts the tRNAs in the A and P-sites. This chain is Small ribosomal subunit protein uS13, found in Psychrobacter arcticus (strain DSM 17307 / VKM B-2377 / 273-4).